The sequence spans 104 residues: Naphthalene 1,2-dioxygenase system, ferredoxin component (104 aa).

Positions 6 to 101 (IEAVALSDIL…VKIENLRVMI (96 aa)) constitute a Rieske domain. The [2Fe-2S] cluster site is built by Cys45, His47, Cys64, and His67.

It belongs to the bacterial ring-hydroxylating dioxygenase ferredoxin component family. As to quaternary structure, the naphthalene dioxygenase (NDO) multicomponent enzyme system is composed of an electron transfer component and a dioxygenase component (iron sulfur protein (ISP)). The electron transfer component is composed of a ferredoxin reductase (NdoR) and a ferredoxin (NdoA), and the dioxygenase component is formed of a heterohexamer (trimer of heterodimers) of three large alpha subunits (NdoB) and three small beta subunits (NdoC). Requires [2Fe-2S] cluster as cofactor.

It functions in the pathway aromatic compound metabolism; naphthalene degradation. Component of the naphthalene dioxygenase (NDO) multicomponent enzyme system which catalyzes the incorporation of both atoms of molecular oxygen into naphthalene to form cis-(1R,2S)-dihydroxy-1,2-dihydronaphthalene. Functions as an intermediate electron transfer protein via a specific interaction with iron sulfur protein components (ISP) (NdoB and NdoC). Also able to catalyze the cis-dihydroxylation of biphenyl and phenanthrene. This is Naphthalene 1,2-dioxygenase system, ferredoxin component from Pseudomonas putida (Arthrobacter siderocapsulatus).